The primary structure comprises 119 residues: MARVKRGVVAHRRHKKILARAKGYYGARSRVYRVAFQAVIKAGQYAYRDRRQKKRQFRALWIARINAGARQNGLSYSRMIDGLKKAQVIIDRRVLADIAMHDAVAFAALAEKAKGALAA.

Belongs to the bacterial ribosomal protein bL20 family.

Functionally, binds directly to 23S ribosomal RNA and is necessary for the in vitro assembly process of the 50S ribosomal subunit. It is not involved in the protein synthesizing functions of that subunit. In Acinetobacter baylyi (strain ATCC 33305 / BD413 / ADP1), this protein is Large ribosomal subunit protein bL20.